The primary structure comprises 367 residues: Female-specific protein transformer (367 aa).

Positions 86 to 280 (ESISSKKIKS…HRHHRSQERS (195 aa)) are disordered. Over residues 109–129 (VKQNSPDVTQKFTKKYGSSEN) the composition is skewed to polar residues. The span at 130-144 (PDFRRHSSYEKDNYH) shows a compositional bias: basic and acidic residues. The segment covering 195 to 223 (NRRRSSHRSRRGSGSPRSRRYTSRHRRRS) has biased composition (basic residues). Basic and acidic residues predominate over residues 229 to 238 (TSWKHNPEHR). Positions 239 to 257 (TSRRSRTRSPRGNRSRRRS) are enriched in basic residues.

Functionally, sex differentiation protein controlling female somatic sexual differentiation. May act by promoting the formation of a splicing enhancer complex. The polypeptide is Female-specific protein transformer (Musca domestica (House fly)).